The chain runs to 155 residues: 6,7-dimethyl-8-ribityllumazine synthase (155 aa).

5-amino-6-(D-ribitylamino)uracil contacts are provided by residues W22, 56-58 (SYE), and 80-82 (AVI). 85–86 (DT) contacts (2S)-2-hydroxy-3-oxobutyl phosphate. H88 (proton donor) is an active-site residue. F113 contributes to the 5-amino-6-(D-ribitylamino)uracil binding site. R127 lines the (2S)-2-hydroxy-3-oxobutyl phosphate pocket.

Belongs to the DMRL synthase family.

It carries out the reaction (2S)-2-hydroxy-3-oxobutyl phosphate + 5-amino-6-(D-ribitylamino)uracil = 6,7-dimethyl-8-(1-D-ribityl)lumazine + phosphate + 2 H2O + H(+). It functions in the pathway cofactor biosynthesis; riboflavin biosynthesis; riboflavin from 2-hydroxy-3-oxobutyl phosphate and 5-amino-6-(D-ribitylamino)uracil: step 1/2. Its function is as follows. Catalyzes the formation of 6,7-dimethyl-8-ribityllumazine by condensation of 5-amino-6-(D-ribitylamino)uracil with 3,4-dihydroxy-2-butanone 4-phosphate. This is the penultimate step in the biosynthesis of riboflavin. The protein is 6,7-dimethyl-8-ribityllumazine synthase of Deinococcus radiodurans (strain ATCC 13939 / DSM 20539 / JCM 16871 / CCUG 27074 / LMG 4051 / NBRC 15346 / NCIMB 9279 / VKM B-1422 / R1).